The following is a 446-amino-acid chain: Tubulin beta-5 chain (446 aa).

The MREI motif motif lies at 1 to 4 (MREI). Residues Gln-11, Glu-69, Ser-138, Gly-142, Thr-143, Gly-144, Asn-204, and Asn-226 each coordinate GTP. Residue Glu-69 coordinates Mg(2+). Glu-438 is modified (5-glutamyl polyglutamate).

Belongs to the tubulin family. As to quaternary structure, dimer of alpha and beta chains. A typical microtubule is a hollow water-filled tube with an outer diameter of 25 nm and an inner diameter of 15 nM. Alpha-beta heterodimers associate head-to-tail to form protofilaments running lengthwise along the microtubule wall with the beta-tubulin subunit facing the microtubule plus end conferring a structural polarity. Microtubules usually have 13 protofilaments but different protofilament numbers can be found in some organisms and specialized cells. Mg(2+) serves as cofactor. Some glutamate residues at the C-terminus are polyglycylated, resulting in polyglycine chains on the gamma-carboxyl group. Glycylation is mainly limited to tubulin incorporated into axonemes (cilia and flagella) whereas glutamylation is prevalent in neuronal cells, centrioles, axonemes, and the mitotic spindle. Both modifications can coexist on the same protein on adjacent residues, and lowering polyglycylation levels increases polyglutamylation, and reciprocally. The precise function of polyglycylation is still unclear. Post-translationally, some glutamate residues at the C-terminus are polyglutamylated, resulting in polyglutamate chains on the gamma-carboxyl group. Polyglutamylation plays a key role in microtubule severing by spastin (SPAST). SPAST preferentially recognizes and acts on microtubules decorated with short polyglutamate tails: severing activity by SPAST increases as the number of glutamates per tubulin rises from one to eight, but decreases beyond this glutamylation threshold.

It is found in the cytoplasm. Its subcellular location is the cytoskeleton. Its function is as follows. Tubulin is the major constituent of microtubules, a cylinder consisting of laterally associated linear protofilaments composed of alpha- and beta-tubulin heterodimers. Microtubules grow by the addition of GTP-tubulin dimers to the microtubule end, where a stabilizing cap forms. Below the cap, tubulin dimers are in GDP-bound state, owing to GTPase activity of alpha-tubulin. The protein is Tubulin beta-5 chain of Gallus gallus (Chicken).